The chain runs to 375 residues: Succinyl-diaminopimelate desuccinylase (375 aa).

His66 contacts Zn(2+). Asp68 is an active-site residue. Asp99 contributes to the Zn(2+) binding site. Glu133 (proton acceptor) is an active-site residue. Zn(2+)-binding residues include Glu134, Glu162, and His348.

It belongs to the peptidase M20A family. DapE subfamily. As to quaternary structure, homodimer. Zn(2+) serves as cofactor. The cofactor is Co(2+).

The catalysed reaction is N-succinyl-(2S,6S)-2,6-diaminopimelate + H2O = (2S,6S)-2,6-diaminopimelate + succinate. Its pathway is amino-acid biosynthesis; L-lysine biosynthesis via DAP pathway; LL-2,6-diaminopimelate from (S)-tetrahydrodipicolinate (succinylase route): step 3/3. Its function is as follows. Catalyzes the hydrolysis of N-succinyl-L,L-diaminopimelic acid (SDAP), forming succinate and LL-2,6-diaminopimelate (DAP), an intermediate involved in the bacterial biosynthesis of lysine and meso-diaminopimelic acid, an essential component of bacterial cell walls. The polypeptide is Succinyl-diaminopimelate desuccinylase (Buchnera aphidicola subsp. Acyrthosiphon pisum (strain APS) (Acyrthosiphon pisum symbiotic bacterium)).